The primary structure comprises 354 residues: Photosystem II protein D1 2 (354 aa).

Helical transmembrane passes span 29–46, 118–133, and 142–156; these read YIGWFGVLMIPTLLTATT, HFLIGVFCYMGREWEL, and WIAVAYSAPVAAATA. Chlorophyll a is bound at residue H118. Position 126 (Y126) interacts with pheophytin a. [CaMn4O5] cluster is bound by residues D170 and E189. A helical membrane pass occupies residues 197-218; that stretch reads FHQLGVAGVFGGALFSAMHGSL. H198 serves as a coordination point for chlorophyll a. A quinone-binding positions include H215 and 264–265; that span reads SF. Fe cation is bound at residue H215. Residue H272 participates in Fe cation binding. A helical transmembrane segment spans residues 274-288; that stretch reads FLAAWPVIGIWFTAL. The [CaMn4O5] cluster site is built by H332, E333, D342, and A344. A propeptide spanning residues 345–354 is cleaved from the precursor; that stretch reads AVEVAPAVRG.

Belongs to the reaction center PufL/M/PsbA/D family. In terms of assembly, PSII is composed of 1 copy each of membrane proteins PsbA, PsbB, PsbC, PsbD, PsbE, PsbF, PsbH, PsbI, PsbJ, PsbK, PsbL, PsbM, PsbT, PsbX, PsbY, PsbZ, Psb30/Ycf12, peripheral proteins PsbO, CyanoQ (PsbQ), PsbU, PsbV and a large number of cofactors. It forms dimeric complexes. The D1/D2 heterodimer binds P680, chlorophylls that are the primary electron donor of PSII, and subsequent electron acceptors. It shares a non-heme iron and each subunit binds pheophytin, quinone, additional chlorophylls, carotenoids and lipids. D1 provides most of the ligands for the Mn4-Ca-O5 cluster of the oxygen-evolving complex (OEC). There is also a Cl(-1) ion associated with D1 and D2, which is required for oxygen evolution. The PSII complex binds additional chlorophylls, carotenoids and specific lipids. serves as cofactor. In terms of processing, tyr-161 forms a radical intermediate that is referred to as redox-active TyrZ, YZ or Y-Z. C-terminally processed by CtpA; processing is essential to allow assembly of the oxygen-evolving complex and thus photosynthetic growth.

It localises to the cellular thylakoid membrane. It catalyses the reaction 2 a plastoquinone + 4 hnu + 2 H2O = 2 a plastoquinol + O2. Its function is as follows. Photosystem II (PSII) is a light-driven water:plastoquinone oxidoreductase that uses light energy to abstract electrons from H(2)O, generating O(2) and a proton gradient subsequently used for ATP formation. It consists of a core antenna complex that captures photons, and an electron transfer chain that converts photonic excitation into a charge separation. The D1/D2 (PsbA/PsbD) reaction center heterodimer binds P680, the primary electron donor of PSII as well as several subsequent electron acceptors. In Synechococcus sp. (strain JA-2-3B'a(2-13)) (Cyanobacteria bacterium Yellowstone B-Prime), this protein is Photosystem II protein D1 2.